Reading from the N-terminus, the 545-residue chain is Hyaluronidase PH-20 (545 aa).

An N-terminal signal peptide occupies residues 1 to 35 (MGVLKFKHIFFGSAVELSGVFQIVFIFLLIPCCLT). Intrachain disulfides connect C60–C355 and C224–C239. A glycan (N-linked (GlcNAc...) asparagine) is linked at N82. The Proton donor role is filled by E148. N-linked (GlcNAc...) asparagine glycosylation occurs at N180. N-linked (GlcNAc...) asparagine glycosylation is present at N372. Cystine bridges form between C380–C391, C385–C439, and C441–C468.

This sequence belongs to the glycosyl hydrolase 56 family. In terms of tissue distribution, testis.

The protein resides in the cell membrane. It catalyses the reaction Random hydrolysis of (1-&gt;4)-linkages between N-acetyl-beta-D-glucosamine and D-glucuronate residues in hyaluronate.. Its function is as follows. Involved in sperm-egg adhesion. Upon fertilization sperm must first penetrate a layer of cumulus cells that surrounds the egg before reaching the zona pellucida. The cumulus cells are embedded in a matrix containing hyaluronic acid which is formed prior to ovulation. This protein aids in penetrating the layer of cumulus cells by digesting hyaluronic acid. This Oryctolagus cuniculus (Rabbit) protein is Hyaluronidase PH-20 (SPAM1).